A 526-amino-acid chain; its full sequence is MQPDPQPHGRGREKAAGAGPRLPPPVTAPSVGRPASVLPHKTANVRDHYRIGKKLGQGQFGTTYLCVGKPDGGEYACKSIPKRKLLCREDYEDVWREIQIMHHLSEHPNVVRIRGAYEDALFVHIVMELCAGGELFDRIVAKGHYTERAAALLIRTIVGVVEGCHSLGVMHRDLKPENFLFASTAEDAPLKATDFGLSVFYKPGDKFSDVVGSPYYVAPEVLQKIYGPEADVWSAGVILYILLCGVPPFWAETESGIFRQILRGKLDLESDPWPSISDSAKDLVRNMLIRDPTKRFTAHEVLCHPWIVDDAVAPDKPIDSAVLSRLKHFSAMNKLKKMALRVIAESLSEEEIGGLKELFKMIDTDNSGTITYDELKNGLKRVGSDLMEPEIQALMDAADIDNSGTIDYGEFLAATLHMNKLEREENLVSAFTFFDKDGSGFITIDELSQACEQFGLSDVHLEDMIKDVDQNNDGQIDYSEFAAMMRKGNAGGANAGGVTSTGGTGRRTMRNSLRVNLGDILKPNEN.

Residues 1-37 (MQPDPQPHGRGREKAAGAGPRLPPPVTAPSVGRPASV) form a disordered region. The Protein kinase domain occupies 49–307 (YRIGKKLGQG…AHEVLCHPWI (259 aa)). ATP is bound by residues 55–63 (LGQGQFGTT) and Lys-78. Residue Asp-173 is the Proton acceptor of the active site. The segment at 313–343 (APDKPIDSAVLSRLKHFSAMNKLKKMALRVI) is autoinhibitory domain. 4 EF-hand domains span residues 350-385 (EEIGGLKELFKMIDTDNSGTITYDELKNGLKRVGSD), 386-421 (LMEPEIQALMDAADIDNSGTIDYGEFLAATLHMNKL), 422-457 (EREENLVSAFTFFDKDGSGFITIDELSQACEQFGLS), and 460-491 (HLEDMIKDVDQNNDGQIDYSEFAAMMRKGNAG). 19 residues coordinate Ca(2+): Asp-363, Asp-365, Ser-367, Thr-369, Glu-374, Asp-399, Asp-401, Ser-403, Thr-405, Glu-410, Asp-435, Asp-437, Ser-439, Glu-446, Asp-469, Asn-471, Asp-473, Gln-475, and Glu-480.

The protein belongs to the protein kinase superfamily. Ser/Thr protein kinase family. CDPK subfamily.

The enzyme catalyses L-seryl-[protein] + ATP = O-phospho-L-seryl-[protein] + ADP + H(+). It catalyses the reaction L-threonyl-[protein] + ATP = O-phospho-L-threonyl-[protein] + ADP + H(+). Activated by calcium. Autophosphorylation may play an important role in the regulation of the kinase activity. In terms of biological role, may play a role in signal transduction pathways that involve calcium as a second messenger. The chain is Calcium-dependent protein kinase 28 from Oryza sativa subsp. japonica (Rice).